We begin with the raw amino-acid sequence, 494 residues long: Fumarate hydratase, mitochondrial (494 aa).

Residues 1–15 (MLRASATRFLSQAKN) constitute a mitochondrion transit peptide. Residues 128-130 (SGT), 159-162 (HPND), 169-171 (SSN), and Thr-217 contribute to the substrate site. Catalysis depends on His-218, which acts as the Proton donor/acceptor. The active site involves Ser-348. Residues Ser-349 and 354-356 (KVN) each bind substrate.

Belongs to the class-II fumarase/aspartase family. Fumarase subfamily. In terms of assembly, homotetramer.

The protein resides in the mitochondrion matrix. It localises to the cytoplasm. It is found in the nucleus. It carries out the reaction (S)-malate = fumarate + H2O. Its pathway is carbohydrate metabolism; tricarboxylic acid cycle; (S)-malate from fumarate: step 1/1. Its function is as follows. Catalyzes the reversible stereospecific interconversion of fumarate to L-malate. In mitochondrion, catalyzes the hydration of fumarate to L-malate in the tricarboxylic acid (TCA) cycle to facilitate a transition step in the production of energy in the form of NADH. In cytoplasm and nucleus, involved in DNA repair in response to DNA damage: following DNA double-strand breaks (DSBs), translocates from the cytosol to the nucleus and promotes DNA repair by catalyzing the dehydration of L-malate to fumarate. The sequence is that of Fumarate hydratase, mitochondrial from Rhizopus oryzae (Mucormycosis agent).